Reading from the N-terminus, the 385-residue chain is Leucine aminopeptidase 1 (385 aa).

Residues 1–20 (MKLPSLLSLGVAASTTIVAA) form the signal peptide. Residues 21 to 87 (VPDQKPIGDT…FPKTFAQTTV (67 aa)) constitute a propeptide that is removed on maturation. The N-linked (GlcNAc...) asparagine glycan is linked to Asn177. His185, Asp204, Glu243, and Asp270 together coordinate Zn(2+). The cysteines at positions 319 and 323 are disulfide-linked. His352 contributes to the Zn(2+) binding site.

It belongs to the peptidase M28 family. M28E subfamily. Monomer. Zn(2+) serves as cofactor.

The protein resides in the secreted. In terms of biological role, extracellular aminopeptidase that allows assimilation of proteinaceous substrates. This Ajellomyces capsulatus (strain NAm1 / WU24) (Darling's disease fungus) protein is Leucine aminopeptidase 1 (LAP1).